The following is a 155-amino-acid chain: Protein-export protein SecB (155 aa).

It belongs to the SecB family. In terms of assembly, homotetramer, a dimer of dimers. One homotetramer interacts with 1 SecA dimer.

It localises to the cytoplasm. Functionally, one of the proteins required for the normal export of preproteins out of the cell cytoplasm. It is a molecular chaperone that binds to a subset of precursor proteins, maintaining them in a translocation-competent state. It also specifically binds to its receptor SecA. The protein is Protein-export protein SecB of Cronobacter sakazakii (strain ATCC BAA-894) (Enterobacter sakazakii).